We begin with the raw amino-acid sequence, 394 residues long: Probable malate--CoA ligase subunit beta (394 aa).

Positions Lys-9–Phe-244 constitute an ATP-grasp domain. ATP-binding residues include Lys-46, Glu-99, Val-102, and Glu-107. Residues Asn-199 and Asp-213 each contribute to the Mg(2+) site.

The protein belongs to the succinate/malate CoA ligase beta subunit family. Heterotetramer of two alpha and two beta subunits. Mg(2+) serves as cofactor.

It catalyses the reaction (S)-malate + ATP + CoA = (S)-malyl-CoA + ADP + phosphate. Its pathway is one-carbon metabolism; formaldehyde assimilation via serine pathway. This Mesorhizobium japonicum (strain LMG 29417 / CECT 9101 / MAFF 303099) (Mesorhizobium loti (strain MAFF 303099)) protein is Probable malate--CoA ligase subunit beta (mtkA).